Reading from the N-terminus, the 363-residue chain is Aminomethyltransferase (363 aa).

It belongs to the GcvT family. The glycine cleavage system is composed of four proteins: P, T, L and H.

The catalysed reaction is N(6)-[(R)-S(8)-aminomethyldihydrolipoyl]-L-lysyl-[protein] + (6S)-5,6,7,8-tetrahydrofolate = N(6)-[(R)-dihydrolipoyl]-L-lysyl-[protein] + (6R)-5,10-methylene-5,6,7,8-tetrahydrofolate + NH4(+). In terms of biological role, the glycine cleavage system catalyzes the degradation of glycine. This chain is Aminomethyltransferase, found in Prosthecochloris aestuarii (strain DSM 271 / SK 413).